We begin with the raw amino-acid sequence, 149 residues long: Glutamyl-tRNA(Gln) amidotransferase subunit C, mitochondrial (149 aa).

The protein belongs to the GatC family. In terms of assembly, subunit of the heterotrimeric GatCAB amidotransferase (AdT) complex, composed of A, B and C subunits.

The protein localises to the mitochondrion. It catalyses the reaction L-glutamyl-tRNA(Gln) + L-glutamine + ATP + H2O = L-glutaminyl-tRNA(Gln) + L-glutamate + ADP + phosphate + H(+). Its function is as follows. Allows the formation of correctly charged Gln-tRNA(Gln) through the transamidation of misacylated Glu-tRNA(Gln) in the mitochondria. The reaction takes place in the presence of glutamine and ATP through an activated gamma-phospho-Glu-tRNA(Gln). This Trichoplax adhaerens (Trichoplax reptans) protein is Glutamyl-tRNA(Gln) amidotransferase subunit C, mitochondrial.